The following is a 245-amino-acid chain: Fibroblast growth factor-binding protein 3 (245 aa).

The N-terminal stretch at 1–28 (MSPPRPRASLSPLTLLLLLGGCLLSAAG) is a signal peptide. The segment at 33–52 (AAGREVTRASRPTVGSSGRF) is disordered. Disulfide bonds link cysteine 60–cysteine 81 and cysteine 91–cysteine 125. The interval 136 to 216 (CARKTAGSDL…PAAAGFQPNG (81 aa)) is disordered. The span at 170–180 (RSRQSVRSPSS) shows a compositional bias: low complexity. The cysteines at positions 228 and 236 are disulfide-linked.

Belongs to the fibroblast growth factor-binding protein family. As to quaternary structure, interacts with FGF2. In terms of tissue distribution, in the adult, highly expressed in brain with lower levels in ovary. In the embryo, highest levels are found in the brain and spinal cord at 14 dpc and expression is almost completely restricted to the brain by 18 dpc. In the adult and postnatal brain, highly expressed in the orbitofrontal cortex where it is concentrated primarily in differentiated neurons.

It localises to the secreted. Functionally, heparin-binding protein which binds to FGF2, prevents binding of FGF2 to heparin and probably inhibits immobilization of FGF2 on extracellular matrix glycosaminoglycans, allowing its release and subsequent activation of FGFR signaling which leads to increased vascular permeability. In Mus musculus (Mouse), this protein is Fibroblast growth factor-binding protein 3 (Fgfbp3).